The chain runs to 496 residues: Gasdermin-E (496 aa).

Positions 1 to 56 (MFAKATRNFLREVDADGDLIAVSNLNDSDKLQLLSLVTKKKRFWCWQRPKYQFLSL) are membrane targeting domain. Cys45 bears the S-(2-succinyl)cysteine mark. Residue Lys120 forms a Glycyl lysine isopeptide (Lys-Gly) (interchain with G-Cter in ubiquitin) linkage. 3 positions are modified to S-(2-succinyl)cysteine: Cys156, Cys168, and Cys180. A Glycyl lysine isopeptide (Lys-Gly) (interchain with G-Cter in ubiquitin) cross-link involves residue Lys189. S-(2-succinyl)cysteine is present on residues Cys235, Cys371, Cys408, Cys417, and Cys489.

Belongs to the gasdermin family. As to quaternary structure, homooligomer; homooligomeric ring-shaped pore complex containing 27-28 subunits when inserted in the membrane. Post-translationally, cleavage at Asp-270 by CASP3 (mature and uncleaved precursor forms) or granzyme B (GZMB) relieves autoinhibition and is sufficient to initiate pyroptosis. In terms of processing, succination by the Krebs cycle intermediate fumarate, which leads to S-(2-succinyl)cysteine residues, inhibits processing by caspases, and ability to initiate pyroptosis. Succination modification is catalyzed by a non-enzymatic reaction caused by an accumulation of fumarate. Ubiquitinated at Lys-120 and Lys-189 via 'Lys-48'-linked polyubiquitin chains, leading to proteasomal degradation. Deubiquitinated by USP48, leading to increased stability. Post-translationally, palmitoylated. Expressed in cochlea. Low level of expression in heart, brain, placenta, lung, liver, skeletal muscle, kidney and pancreas, with highest expression in placenta.

It localises to the cell membrane. It is found in the cytoplasm. Its subcellular location is the cytosol. With respect to regulation, the full-length protein before cleavage is inactive: intramolecular interactions between N- and C-terminal domains mediate autoinhibition in the absence of activation signal. The intrinsic pyroptosis-inducing activity is carried by the released N-terminal moiety (Gasdermin-E, N-terminal) following cleavage by CASP3 or granzyme B (GZMB). Activated by NLRP1 in the absence of GSDMD expression: NLRP1 cleaves and activates CASP8, promoting downstream activation of CASP3 and subsequent activation of GSDME. Its activity is regulated as follows. (Microbial infection) Activated upon human coronavirus SARS-CoV-2 infection, leading to lung epithelial cell death. Activation takes place in response to (1) activation of NLRP1 and (2) inactivation of GSDMD following NLRP1 and GSDMD cleavage by the SARS-CoV-2 3C-like proteinase nsp5. Precursor of a pore-forming protein that converts non-inflammatory apoptosis to pyroptosis. This form constitutes the precursor of the pore-forming protein: upon cleavage, the released N-terminal moiety (Gasdermin-E, N-terminal) binds to membranes and forms pores, triggering pyroptosis. Functionally, pore-forming protein produced by cleavage by CASP3 or granzyme B (GZMB), which converts non-inflammatory apoptosis to pyroptosis or promotes granzyme-mediated pyroptosis, respectively. After cleavage, moves to the plasma membrane, homooligomerizes within the membrane and forms pores of 10-15 nanometers (nm) of inner diameter, allowing the release of mature interleukins (IL1B and IL16) and triggering pyroptosis. Binds to inner leaflet lipids, bisphosphorylated phosphatidylinositols, such as phosphatidylinositol (4,5)-bisphosphate. Cleavage by CASP3 switches CASP3-mediated apoptosis induced by TNF or danger signals, such as chemotherapy drugs, to pyroptosis. Mediates secondary necrosis downstream of the mitochondrial apoptotic pathway and CASP3 activation as well as in response to viral agents. Exhibits bactericidal activity. Cleavage by GZMB promotes tumor suppressor activity by triggering robust anti-tumor immunity. Suppresses tumors by mediating granzyme-mediated pyroptosis in target cells of natural killer (NK) cells: cleavage by granzyme B (GZMB), delivered to target cells from NK-cells, triggers pyroptosis of tumor cells and tumor suppression. May play a role in the p53/TP53-regulated cellular response to DNA damage. In terms of biological role, (Microbial infection) Pore-forming protein, which promotes maternal placental pyroptosis in response to Zika virus infection, contributing to adverse fetal outcomes. The polypeptide is Gasdermin-E (Homo sapiens (Human)).